Reading from the N-terminus, the 1074-residue chain is Zinc finger protein 518B (1074 aa).

Residues 12 to 24 (HLNGGHNSLTMSP) are compositionally biased toward polar residues. The tract at residues 12–36 (HLNGGHNSLTMSPKQPDANGAPRPN) is disordered. 2 C2H2-type zinc fingers span residues 162 to 184 (FICS…LVKH) and 190 to 213 (YQCE…KRVH). Glycyl lysine isopeptide (Lys-Gly) (interchain with G-Cter in SUMO2) cross-links involve residues lysine 482, lysine 491, and lysine 558. A disordered region spans residues 568-590 (SNRKQEDNQTEEHKAVSTVGQIS). Positions 570–582 (RKQEDNQTEEHKA) are enriched in basic and acidic residues. A Glycyl lysine isopeptide (Lys-Gly) (interchain with G-Cter in SUMO2) cross-link involves residue lysine 594. 2 disordered regions span residues 603–632 (TGED…DGPV) and 678–704 (KPSS…KATS). Residues 604 to 622 (GEDRSQQPGDKPLELKNSE) show a composition bias toward basic and acidic residues. Polar residues predominate over residues 693 to 704 (GQASKGTSKATS). Glycyl lysine isopeptide (Lys-Gly) (interchain with G-Cter in SUMO2) cross-links involve residues lysine 809, lysine 846, and lysine 860. A C2H2-type 3 zinc finger spans residues 1036 to 1058 (FKCWFCGRLYEDQEEWMSHGQRH).

It belongs to the krueppel C2H2-type zinc-finger protein family.

Its subcellular location is the nucleus. Functionally, through its association with the EHMT1-EHMT2/G9A and PRC2/EED-EZH2 histone methyltransferase complexes may function in gene silencing, regulating repressive post-translational methylation of histone tails at promoters of target genes. The chain is Zinc finger protein 518B (ZNF518B) from Homo sapiens (Human).